Here is a 2696-residue protein sequence, read N- to C-terminus: Protein ILITYHIA (2696 aa).

Residues 1-18 (MSYSMVNASSAVSSPETA) show a composition bias toward polar residues. The disordered stretch occupies residues 1–26 (MSYSMVNASSAVSSPETAKNSDEPPP). 9 HEAT repeats span residues 162–204 (DIAP…MKTF), 253–290 (STQA…IYSL), 303–340 (KDSP…DVLN), 364–400 (EFQT…IDLS), 401–438 (KYAL…KSSN), 487–525 (SLSR…RSSV), 526–562 (AIQP…NPDT), 564–601 (SQIS…SKIA), and 642–677 (VVCV…FLLC). The tract at residues 901–941 (KQEPSSNHSLKKGLASRETANSGRRDTAKLTKKADKGKTAK) is disordered. The segment covering 923-941 (GRRDTAKLTKKADKGKTAK) has biased composition (basic and acidic residues). HEAT repeat units lie at residues 985 to 1021 (HSQL…CTVQ), 1082 to 1118 (DTFT…GLQA), 1188 to 1225 (HDLG…ESPS), 1273 to 1311 (KDLP…KHGK), 1315 to 1355 (SLLF…HLAR), 1358 to 1395 (PKVH…SKQE), 1397 to 1433 (APAL…GFGI), 1436 to 1474 (LKKY…KLGK), 1478 to 1515 (PYVI…QLSA), 1516 to 1553 (YGVK…CAPQ), 1564 to 1600 (PKLT…VIKN), 1601 to 1638 (PEIS…NSVD), 1640 to 1677 (PSLA…LVTE), 1683 to 1720 (PYIG…GMGE), 1722 to 1759 (NFPD…ALGT), 1761 to 1797 (YFEN…SLGA), 1801 to 1838 (KYLQ…HHAT), and 1840 to 1876 (SLPL…KVAG). At Ser1887 the chain carries Phosphoserine. 19 HEAT repeats span residues 1908–1945 (DKRN…NTPK), 1949–1986 (EIMP…KLGE), 1988–2024 (VLPL…SAGR), 2029–2066 (SFMD…SAGL), 2067–2102 (QAMD…VRTA), 2104–2137 (VLPH…AGFN), 2138–2175 (THLG…VIDE), 2177–2213 (GVET…SSKL), 2217–2254 (DEAP…SVPK), 2258–2292 (PSYI…LCLP), 2293–2330 (KSLK…VTSE), 2335–2373 (EFVI…RGGM), 2377–2414 (PFLP…LSTR), 2416–2450 (DPLV…HAGK), 2455–2492 (AVRV…YLEA), 2494–2530 (QLSV…HNPS), 2536–2573 (SLFS…KQLA), 2580–2617 (KVVI…DNPS), and 2620–2658 (MANI…LTKG).

This sequence belongs to the GCN1 family.

Its function is as follows. Involved in immunity against bacterial infection and in non-host resistance. Required for embryo development. Required for systemic acquired resistance, but functions in an salicylic acid-independent manner. Required for bacterium-triggered stomatal closure response. The protein is Protein ILITYHIA of Arabidopsis thaliana (Mouse-ear cress).